The primary structure comprises 724 residues: Methionine--tRNA ligase (724 aa).

Residues 12–22 carry the 'HIGH' region motif; sequence PYVNNIPHLGN. Cys-143, Cys-146, Cys-155, and Cys-158 together coordinate Zn(2+). The 'KMSKS' region motif lies at 330–334; it reads KFSKS. Position 333 (Lys-333) interacts with ATP. One can recognise a tRNA-binding domain in the interval 560–665; sequence FREKVLLRVV…KNPIAGERII (106 aa).

Belongs to the class-I aminoacyl-tRNA synthetase family. MetG type 1 subfamily. As to quaternary structure, homodimer. The cofactor is Zn(2+).

The protein localises to the cytoplasm. The catalysed reaction is tRNA(Met) + L-methionine + ATP = L-methionyl-tRNA(Met) + AMP + diphosphate. Its function is as follows. Is required not only for elongation of protein synthesis but also for the initiation of all mRNA translation through initiator tRNA(fMet) aminoacylation. The sequence is that of Methionine--tRNA ligase from Borreliella afzelii (strain PKo) (Borrelia afzelii).